A 310-amino-acid chain; its full sequence is Probable cell division protein WhiA (310 aa).

The segment at residues 277 to 310 (SLKELAEQVPDGPISKSGVNHRLKKLHEIAENLR) is a DNA-binding region (H-T-H motif).

The protein belongs to the WhiA family.

Involved in cell division and chromosome segregation. In Lactobacillus delbrueckii subsp. bulgaricus (strain ATCC 11842 / DSM 20081 / BCRC 10696 / JCM 1002 / NBRC 13953 / NCIMB 11778 / NCTC 12712 / WDCM 00102 / Lb 14), this protein is Probable cell division protein WhiA.